Consider the following 432-residue polypeptide: Glutamate-1-semialdehyde 2,1-aminomutase (432 aa).

Position 272 is an N6-(pyridoxal phosphate)lysine (Lys272).

It belongs to the class-III pyridoxal-phosphate-dependent aminotransferase family. HemL subfamily. Homodimer. Requires pyridoxal 5'-phosphate as cofactor.

It is found in the cytoplasm. It carries out the reaction (S)-4-amino-5-oxopentanoate = 5-aminolevulinate. The protein operates within porphyrin-containing compound metabolism; protoporphyrin-IX biosynthesis; 5-aminolevulinate from L-glutamyl-tRNA(Glu): step 2/2. It participates in porphyrin-containing compound metabolism; chlorophyll biosynthesis. The polypeptide is Glutamate-1-semialdehyde 2,1-aminomutase (Trichodesmium erythraeum (strain IMS101)).